Reading from the N-terminus, the 549-residue chain is Glucose-6-phosphate isomerase (549 aa).

E355 acts as the Proton donor in catalysis. Active-site residues include H386 and K514.

The protein belongs to the GPI family.

It localises to the cytoplasm. The enzyme catalyses alpha-D-glucose 6-phosphate = beta-D-fructose 6-phosphate. It participates in carbohydrate biosynthesis; gluconeogenesis. The protein operates within carbohydrate degradation; glycolysis; D-glyceraldehyde 3-phosphate and glycerone phosphate from D-glucose: step 2/4. In terms of biological role, catalyzes the reversible isomerization of glucose-6-phosphate to fructose-6-phosphate. This Salmonella enteritidis PT4 (strain P125109) protein is Glucose-6-phosphate isomerase.